Consider the following 158-residue polypeptide: Disease resistance response protein Pi49 (158 aa).

Belongs to the BetVI family.

This chain is Disease resistance response protein Pi49 (DRR49A), found in Pisum sativum (Garden pea).